We begin with the raw amino-acid sequence, 93 residues long: Cobalt transport protein CbiN (93 aa).

A run of 2 helical transmembrane segments spans residues 5-25 (LMLL…NHGG) and 63-83 (LLFT…LGYC).

It belongs to the CbiN family. Forms an energy-coupling factor (ECF) transporter complex composed of an ATP-binding protein (A component, CbiO), a transmembrane protein (T component, CbiQ) and 2 possible substrate-capture proteins (S components, CbiM and CbiN) of unknown stoichimetry.

The protein localises to the cell inner membrane. It functions in the pathway cofactor biosynthesis; adenosylcobalamin biosynthesis. Part of the energy-coupling factor (ECF) transporter complex CbiMNOQ involved in cobalt import. This Salmonella choleraesuis (strain SC-B67) protein is Cobalt transport protein CbiN.